The primary structure comprises 330 residues: GTPase Obg (330 aa).

The 159-residue stretch at 1 to 159 folds into the Obg domain; the sequence is MHFIDEVKIY…MWIHLSLKLL (159 aa). In terms of domain architecture, OBG-type G spans 160–327; sequence SDVGLVGFPN…IVKLALETIK (168 aa). Residues 166–173, 191–195, 212–215, 279–282, and 308–310 each bind GTP; these read GFPNAGKS, FTTLV, DIPG, NKCD, and STY. Mg(2+) is bound by residues serine 173 and threonine 193.

This sequence belongs to the TRAFAC class OBG-HflX-like GTPase superfamily. OBG GTPase family. In terms of assembly, monomer. Mg(2+) serves as cofactor.

Its subcellular location is the cytoplasm. Its function is as follows. An essential GTPase which binds GTP, GDP and possibly (p)ppGpp with moderate affinity, with high nucleotide exchange rates and a fairly low GTP hydrolysis rate. Plays a role in control of the cell cycle, stress response, ribosome biogenesis and in those bacteria that undergo differentiation, in morphogenesis control. This Rickettsia massiliae (strain Mtu5) protein is GTPase Obg.